A 138-amino-acid polypeptide reads, in one-letter code: Large ribosomal subunit protein uL16 (138 aa).

Residues Met1–Gln13 are compositionally biased toward basic residues. Residues Met1–Gly24 form a disordered region.

The protein belongs to the universal ribosomal protein uL16 family. Part of the 50S ribosomal subunit.

Functionally, binds 23S rRNA and is also seen to make contacts with the A and possibly P site tRNAs. The protein is Large ribosomal subunit protein uL16 of Burkholderia lata (strain ATCC 17760 / DSM 23089 / LMG 22485 / NCIMB 9086 / R18194 / 383).